Here is a 929-residue protein sequence, read N- to C-terminus: Synaptopodin (929 aa).

An N-acetylmethionine modification is found at Met-1. Positions 1-12 are enriched in pro residues; sequence MLGPHLPPPPLA. Residues 1 to 260 form a disordered region; the sequence is MLGPHLPPPP…EASLLRHLEK (260 aa). Composition is skewed to basic and acidic residues over residues 60–69 and 91–110; these read GVSRSGDDSA and SREE…DWDV. Ser-140 bears the Phosphoserine mark. Residues 142–151 are compositionally biased toward basic and acidic residues; that stretch reads TEKDLKEAKA. The span at 152–170 shows a compositional bias: polar residues; sequence RSQQIAAQLTTPPSSNSRG. Phosphoserine is present on Ser-207. The span at 224–234 shows a compositional bias: pro residues; that stretch reads EPGPPRHPSPQ. At Ser-263 the chain carries Phosphoserine. Residues 285–389 form a disordered region; sequence GLHLSQNREA…TLCADGQPQA (105 aa). The segment covering 317–332 has biased composition (low complexity); that stretch reads LASPSATLTTPTSNSS. A glycan (N-linked (GlcNAc...) asparagine) is linked at Asn-330. A compositionally biased stretch (polar residues) spans 333-379; it reads HNPPATDVNQNPPATVVPQSLPLSSIQQNSSEAQLPSNGTGPASKPS. Phosphoserine occurs at positions 501 and 525. Residues 509-558 are disordered; the sequence is FGEKAPAPQPPSLPDRSPRPQRHIMSRSPMVERRMMGQRSPASERRPLGN. Position 560 is a phosphothreonine (Thr-560). Positions 562 to 565 match the PPxY motif motif; it reads PPTY. Ser-580 is modified (phosphoserine). The short motif at 581 to 584 is the PPxY motif element; sequence PPSY. Disordered regions lie at residues 589-610 and 630-726; these read PSSD…KTGI and KPKV…KGAE. A compositionally biased stretch (basic and acidic residues) spans 646–656; the sequence is ADEKRRQRDQG. 3 positions are modified to phosphoserine: Ser-685, Ser-702, and Tyr-738. Residues 685–698 show a composition bias toward low complexity; it reads SPAAAEEVVPEWAS. Residues 740–763 form a disordered region; it reads IESSSHTPELARCPSPTMSLPSSW. Thr-746 carries the post-translational modification Phosphothreonine. A phosphoserine mark is found at Ser-754, Ser-758, and Ser-779. Thr-783 carries the post-translational modification Phosphothreonine. Pro-784, Thr-804, Arg-812, Lys-826, Ser-833, Ser-854, Pro-871, and Pro-894 each carry phosphoserine. Low complexity predominate over residues 826-839; the sequence is KVSPRAASPAKPSS. A disordered region spans residues 826–916; sequence KVSPRAASPA…RPSFSTRNAG (91 aa). The segment covering 866–880 has biased composition (polar residues); that stretch reads GLYTSPGQDSLQPTA.

It belongs to the synaptopodin family. As to quaternary structure, interacts with BAIAP1. Interacts with actin. Interacts (via PPxY motifs) with WWC1 (via WW domains). Post-translationally, O-glycosylated. Expressed in cerebral cortex.

The protein localises to the cytoplasm. It is found in the cytoskeleton. It localises to the cell junction. The protein resides in the tight junction. Its subcellular location is the perikaryon. The protein localises to the cell projection. It is found in the dendritic spine. It localises to the postsynaptic density. The protein resides in the synapse. Its subcellular location is the cytosol. In terms of biological role, actin-associated protein that may play a role in modulating actin-based shape and motility of dendritic spines and renal podocyte foot processes. Seems to be essential for the formation of spine apparatuses in spines of telencephalic neurons, which is involved in synaptic plasticity. This chain is Synaptopodin (SYNPO), found in Homo sapiens (Human).